A 240-amino-acid chain; its full sequence is Small ribosomal subunit protein uS3 (240 aa).

The KH type-2 domain occupies Ile-39–Arg-107. Basic and acidic residues-rich tracts occupy residues Pro-212–Glu-221 and Pro-231–Arg-240. Residues Pro-212 to Arg-240 are disordered.

It belongs to the universal ribosomal protein uS3 family. Part of the 30S ribosomal subunit. Forms a tight complex with proteins S10 and S14.

Functionally, binds the lower part of the 30S subunit head. Binds mRNA in the 70S ribosome, positioning it for translation. This is Small ribosomal subunit protein uS3 from Paracoccus denitrificans (strain Pd 1222).